A 109-amino-acid chain; its full sequence is MSNIGIDVKAPENVCEDPNCPFHGTLSVRGQIFEGIVTSDKGHDTIVIKREVTGYISKYERYEKRTTSLVAHNPACIKAKVGDTVKVMECRPISKTKSFVVIEKTENLE.

It belongs to the universal ribosomal protein uS17 family. Part of the 30S ribosomal subunit.

Functionally, one of the primary rRNA binding proteins, it binds specifically to the 5'-end of 16S ribosomal RNA. In Methanococcus maripaludis (strain DSM 14266 / JCM 13030 / NBRC 101832 / S2 / LL), this protein is Small ribosomal subunit protein uS17.